Here is a 105-residue protein sequence, read N- to C-terminus: Death-associated protein 1 homolog (105 aa).

Positions 75–105 are disordered; the sequence is AAQVAHQKPVPSAQKLPAGQHLNQHIHQPRK. Positions 95–105 are enriched in polar residues; sequence HLNQHIHQPRK.

It belongs to the DAP-DAPL1 family. In terms of assembly, associates with ribosomes; inhibiting translation. Interacts with eiF5a (eif5a and eif5a2); inhibiting translation.

In terms of biological role, ribosome-binding protein involved in ribosome hibernation, a process during which ribosomes are stabilized in an inactive state and preserved from proteasomal degradation. Acts via its association with eiF5a (eif5a and eif5a2) at the polypeptide exit tunnel of the ribosome, preventing mRNA translation. Involved in ribosome hibernation in the mature egg by preventing mRNA translation, leading to ribosome inactivation. Ribosomes, which are produced in large quantities during oogenesis, are stored and translationally repressed in the egg and early embryo. Compared to dap1b, binds and inactivates ribosomes less efficiently. The sequence is that of Death-associated protein 1 homolog from Danio rerio (Zebrafish).